We begin with the raw amino-acid sequence, 311 residues long: 3-dehydro-scyllo-inosose hydrolase (311 aa).

E35, H37, D46, H117, and E173 together coordinate Zn(2+).

It belongs to the creatininase superfamily. As to quaternary structure, homotrimer. It depends on Zn(2+) as a cofactor.

It catalyses the reaction 3-dehydro-scyllo-inosose + H2O = 5-dehydro-L-gluconate + H(+). It functions in the pathway polyol metabolism; myo-inositol metabolism. Catalyzes the ring-opening hydrolysis of 3-dehydro-scyllo-inosose (diketo-inositol) to 5-dehydro-L-gluconate, and thus probably functions in a myo-inositol degradation pathway together with IolG, IolM and IolO. This chain is 3-dehydro-scyllo-inosose hydrolase, found in Thermotoga maritima (strain ATCC 43589 / DSM 3109 / JCM 10099 / NBRC 100826 / MSB8).